We begin with the raw amino-acid sequence, 303 residues long: Probable cat1 operon transcriptional activator (303 aa).

The region spanning 1-58 (MDLRQFRYFVAVARERNFTRAARQLNIAQPPLSRQIQLLEEEVGVPLLIRNSRPVQLT) is the HTH lysR-type domain. A DNA-binding region (H-T-H motif) is located at residues 18–37 (FTRAARQLNIAQPPLSRQIQ).

It belongs to the LysR transcriptional regulatory family.

Functionally, probable positive regulator of the cat1 operon which encode enzymes responsible for the degradation of catechol to acetyl-CoA via the beta-ketoadipate pathway. This Acinetobacter lwoffii protein is Probable cat1 operon transcriptional activator.